We begin with the raw amino-acid sequence, 113 residues long: Protein Asterix (113 aa).

A helical transmembrane segment spans residues 81–97; sequence IVSSFMLSVSAVVMSYL.

The protein belongs to the Asterix family.

It is found in the membrane. This chain is Protein Asterix, found in Caenorhabditis elegans.